We begin with the raw amino-acid sequence, 402 residues long: Protein FAM53A (402 aa).

Serine 119 carries the phosphoserine modification. A disordered region spans residues 170 to 215 (LVPGLPRRPVSPAGPTSPLTPRPASASSGFVDGSEGSTSSGPPWLS). The short motif at 273-281 (RRVRRKRRR) is the Nuclear localization signal element. Phosphoserine occurs at positions 306 and 309. The segment covering 323-333 (TLVSSPCNSQG) has biased composition (polar residues). A disordered region spans residues 323–402 (TLVSSPCNSQ…DLDLEQIENN (80 aa)). The span at 336–345 (GIITPSSSPR) shows a compositional bias: low complexity.

It belongs to the FAM53 family.

Its subcellular location is the nucleus. May play an important role in neural development; the dorsomedial roof of the third ventricle. In Mus musculus (Mouse), this protein is Protein FAM53A.